The following is a 71-amino-acid chain: Translation initiation factor IF-1 (71 aa).

The S1-like domain maps to 1–71; the sequence is MSKDDLIQFT…LTKGRVIHRH (71 aa).

The protein belongs to the IF-1 family. As to quaternary structure, component of the 30S ribosomal translation pre-initiation complex which assembles on the 30S ribosome in the order IF-2 and IF-3, IF-1 and N-formylmethionyl-tRNA(fMet); mRNA recruitment can occur at any time during PIC assembly.

Its subcellular location is the cytoplasm. One of the essential components for the initiation of protein synthesis. Stabilizes the binding of IF-2 and IF-3 on the 30S subunit to which N-formylmethionyl-tRNA(fMet) subsequently binds. Helps modulate mRNA selection, yielding the 30S pre-initiation complex (PIC). Upon addition of the 50S ribosomal subunit IF-1, IF-2 and IF-3 are released leaving the mature 70S translation initiation complex. In Rickettsia akari (strain Hartford), this protein is Translation initiation factor IF-1.